The primary structure comprises 289 residues: D-xylonolactone lactonase (289 aa).

Glu17 contacts Fe(2+). Residues Arg98, Asn100, Glu119, and Asn145 each contribute to the D-xylono-1,5-lactone site. 2 residues coordinate Fe(2+): Asn145 and Asp195. The Proton donor/acceptor role is filled by Asp195.

It belongs to the SMP-30/CGR1 family. Fe(2+) is required as a cofactor.

The catalysed reaction is D-xylono-1,5-lactone + H2O = D-xylonate + H(+). In terms of biological role, involved in the degradation of D-xylose. Catalyzes the hydrolysis of D-xylonolactone to D-xylonate. This Caulobacter vibrioides (strain ATCC 19089 / CIP 103742 / CB 15) (Caulobacter crescentus) protein is D-xylonolactone lactonase.